The sequence spans 410 residues: Divergent protein kinase domain 1C (410 aa).

The Cytoplasmic segment spans residues 1 to 19 (MARAAGERGRAARCGRWRR). Residues 18–19 (RR) carry the May mediate ER retention motif. Residues 20 to 40 (GALLAFAAWTAGWVLAAALLL) form a helical membrane-spanning segment. The Lumenal portion of the chain corresponds to 41-410 (RAHPSVLSER…TLKELQEAEK (370 aa)).

This sequence belongs to the DIPK family. Post-translationally, among the many cysteines in the lumenal domain, most are probably involved in disulfide bonds. Mainly expressed in the brain and eye, some expression in kidney and skeletal muscle.

The protein resides in the endoplasmic reticulum membrane. In Mus musculus (Mouse), this protein is Divergent protein kinase domain 1C (Dipk1c).